Here is a 224-residue protein sequence, read N- to C-terminus: UPF0758 protein CJA_3522 (224 aa).

Residues 102 to 224 (LLSSPHLVRD…LVSLAERGWL (123 aa)) form the MPN domain. 3 residues coordinate Zn(2+): histidine 173, histidine 175, and aspartate 186. Positions 173–186 (HNHPSGLAEPSQAD) match the JAMM motif motif.

It belongs to the UPF0758 family.

The chain is UPF0758 protein CJA_3522 from Cellvibrio japonicus (strain Ueda107) (Pseudomonas fluorescens subsp. cellulosa).